The following is a 1956-amino-acid chain: Probable cation-transporting ATPase 1 (1956 aa).

Topologically, residues 1–35 are cytoplasmic; that stretch reads MHLMCTGLRNEKLINDRKILYGECNLNIKSDSFII. The chain crosses the membrane as a helical span at residues 36–58; the sequence is LLFKEIMNPFFIFQIFAMIVWSL. Over 59 to 61 the chain is Extracellular; it reads DNY. Residues 62-80 traverse the membrane as a helical segment; the sequence is IEYTISILFITSISIILEL. Residues 81-407 are Cytoplasmic-facing; sequence KNTIKNQKKI…KKELNLINDS (327 aa). The chain crosses the membrane as a helical span at residues 408–427; the sequence is YKFLIILIIYALFSVFILLY. Over 428–440 the chain is Extracellular; it reads ITLSNNEYTNHII. The helical transmembrane segment at 441–462 threads the bilayer; it reads IKCLDIITDAIPPALPTTLTVG. Residues 463-1818 are Cytoplasmic-facing; it reads ISIAISRLKK…SLVNSFQLFK (1356 aa). Asp496 acts as the 4-aspartylphosphate intermediate in catalysis. The tract at residues 901-938 is disordered; it reads YGNNNDDNNDDDNNNDDDNNDDNNNDDNNNDDNNDDNN. Acidic residues predominate over residues 907-935; sequence DNNDDDNNNDDDNNDDNNNDDNNNDDNND. Residues Asp1760 and Asp1764 each coordinate Mg(2+). Residues 1819–1837 form a helical membrane-spanning segment; sequence FISLYSIMQCSQVLILYSI. At 1838–1845 the chain is on the extracellular side; it reads SNKLTDNQ. Residues 1846 to 1863 traverse the membrane as a helical segment; sequence YIFIDIVTILPLSIFMCW. Topologically, residues 1864–1881 are cytoplasmic; the sequence is TSASEKLSKNIPIGKLFS. The helical transmembrane segment at 1882-1905 threads the bilayer; it reads FPILISIYGQIIIQLFFVMISLVV. Residues 1906–1928 are Extracellular-facing; sequence LMNLSFYKYDKNKVMKEKSDDTY. Residues 1929–1952 form a helical membrane-spanning segment; the sequence is LYKAQKYTLIYSLLFSKFVYVYIF. Residues 1953–1956 lie on the Cytoplasmic side of the membrane; sequence KYKE.

The protein belongs to the cation transport ATPase (P-type) (TC 3.A.3) family. Type V subfamily.

Its subcellular location is the membrane. It catalyses the reaction ATP + H2O = ADP + phosphate + H(+). The polypeptide is Probable cation-transporting ATPase 1 (Plasmodium falciparum).